Reading from the N-terminus, the 272-residue chain is Methylsterol monooxygenase 2-1 (272 aa).

A run of 3 helical transmembrane segments spans residues 24-44, 72-94, and 107-127; these read IGSF…YIFL, LLLY…FRFM, and VVSA…YWGH. Residues 113–259 form the Fatty acid hydroxylase domain; it reads LFYFIIEDFV…FVYMDWIFGT (147 aa). The short motif at 127–131 is the Histidine box-1 element; the sequence is HRILH. The short motif at 140 to 144 is the Histidine box-2 element; the sequence is HSVHH. Helical transmembrane passes span 162–182 and 209–229; these read ILFL…HLIT and NFLP…AYSA. The Histidine box-3 signature appears at 231 to 237; it reads FHDYHHR.

The protein belongs to the sterol desaturase family. The cofactor is Fe cation. As to expression, strongly expressed in leaves, flowers, siliques and developing seeds.

The protein localises to the endoplasmic reticulum membrane. The enzyme catalyses 4,4-dimethyl-5alpha-cholest-7-en-3beta-ol + 6 Fe(II)-[cytochrome b5] + 3 O2 + 5 H(+) = 4alpha-carboxy-4beta-methyl-5alpha-cholest-7-ene-3beta-ol + 6 Fe(III)-[cytochrome b5] + 4 H2O. It carries out the reaction 24-methylidenelophenol + 6 Fe(II)-[cytochrome b5] + 3 O2 + 5 H(+) = 4alpha-carboxy-ergosta-7,24(24(1))-dien-3beta-ol + 6 Fe(III)-[cytochrome b5] + 4 H2O. Its function is as follows. Non-heme iron oxygenase involved in sterols biosynthesis by catalyzing the removal of the second methyl group at the C-4 position. 24-ethylidenelophenol and 24-ethyllophenol are the preferred substrates. Together with SMO2-2, required during embryogenesis, probably by maintaining sterols and auxin homeostasis. The sequence is that of Methylsterol monooxygenase 2-1 from Arabidopsis thaliana (Mouse-ear cress).